The sequence spans 564 residues: Zyxin (564 aa).

At Ala2 the chain carries N-acetylalanine. Residues 30 to 141 (VAPKPKVNPF…TQLPPQPREK (112 aa)) are disordered. Pro residues-rich tracts occupy residues 63 to 78 (IPPPPPEDFPLPPPPL) and 93 to 109 (FPPPPPPMIEEPFPPAP). Phosphoserine is present on residues Ser117, Ser144, Ser170, and Ser171. The disordered stretch occupies residues 162-344 (NDPFKARVSS…RSPGGPGPLT (183 aa)). Pro residues-rich tracts occupy residues 174–189 (VPPPVATPFVPKPSTK) and 197–214 (PLPPWKTPSSSQPPPQPQ). Thr180 is modified (phosphothreonine). A compositionally biased stretch (polar residues) spans 234 to 243 (QPVSSANTQP). At Arg244 the chain carries Asymmetric dimethylarginine. A compositionally biased stretch (low complexity) spans 255–275 (PKFAPVAPKFTPVVSKFSPGA). N6-acetyllysine is present on residues Lys256 and Lys263. Phosphothreonine is present on Thr265. Lys270 is modified (N6-acetyllysine). Ser272 and Ser300 each carry phosphoserine. Positions 294 to 310 (SSVSTGSPQPPSFTYAQ) are enriched in polar residues. Residues 311–322 (QKEKPLVQEKQH) are compositionally biased toward basic and acidic residues. At Ser336 the chain carries Phosphoserine. LIM zinc-binding domains follow at residues 376-435 (CGKC…TLEK), 436-495 (CNTC…YAPR), and 496-562 (CSVC…SARA).

It belongs to the zyxin/ajuba family. In terms of assembly, interacts, via the Pro-rich regions, with the EVH1 domains of ENAH, EVL and VASP. Interacts with the first LIM domain of TES. Interacts with SYNPO2.

The protein localises to the cytoplasm. It is found in the cytoskeleton. The protein resides in the cell junction. It localises to the focal adhesion. Its subcellular location is the nucleus. Adhesion plaque protein. Binds alpha-actinin and the CRP protein. Important for targeting TES and ENA/VASP family members to focal adhesions and for the formation of actin-rich structures. May be a component of a signal transduction pathway that mediates adhesion-stimulated changes in gene expression. In Mus musculus (Mouse), this protein is Zyxin (Zyx).